The sequence spans 134 residues: Protein NrdI (134 aa).

The protein belongs to the NrdI family.

In terms of biological role, probably involved in ribonucleotide reductase function. The protein is Protein NrdI of Chromohalobacter salexigens (strain ATCC BAA-138 / DSM 3043 / CIP 106854 / NCIMB 13768 / 1H11).